Consider the following 161-residue polypeptide: Large ribosomal subunit protein uL11 (161 aa).

This sequence belongs to the universal ribosomal protein uL11 family. In terms of assembly, part of the ribosomal stalk of the 50S ribosomal subunit. Interacts with L10 and the large rRNA to form the base of the stalk. L10 forms an elongated spine to which L12 dimers bind in a sequential fashion forming a multimeric L10(L12)X complex.

Functionally, forms part of the ribosomal stalk which helps the ribosome interact with GTP-bound translation factors. In Methanosarcina acetivorans (strain ATCC 35395 / DSM 2834 / JCM 12185 / C2A), this protein is Large ribosomal subunit protein uL11.